We begin with the raw amino-acid sequence, 496 residues long: Glycine receptor subunit beta (496 aa).

Positions Met1 to Ser22 are cleaved as a signal peptide. The Extracellular portion of the chain corresponds to Lys23–Phe268. The N-linked (GlcNAc...) asparagine glycan is linked to Asn54. Glycine is bound by residues Arg108 and Ser174. Cys183 and Cys197 are oxidised to a cystine. Asn242 carries N-linked (GlcNAc...) asparagine glycosylation. The cysteines at positions 243 and 255 are disulfide-linked. Thr250 contacts glycine. A helical transmembrane segment spans residues Tyr269–Trp289. The Cytoplasmic segment spans residues Ile290 to Ala294. Residues Ser295–Thr315 form a helical membrane-spanning segment. Over Leu316–Lys327 the chain is Extracellular. Residues Ala328 to Val349 traverse the membrane as a helical segment. Topologically, residues Val350–Arg471 are cytoplasmic. Thr391 carries the phosphothreonine modification. A helical transmembrane segment spans residues Ile472 to Tyr495. Residue Leu496 is a topological domain, extracellular.

The protein belongs to the ligand-gated ion channel (TC 1.A.9) family. Glycine receptor (TC 1.A.9.3) subfamily. GLRB sub-subfamily. In terms of assembly, forms heteropentamers with glycin receptor alpha subunits. Heteropentamers with GLRA1 can be composed of two GLRA1 and three GLRB subunits, or three GLRA1 and two GLRB subunits, or four GLRA1 subunits and one GLRB subunit. Forms heteropentamers with GLRA2. Functional GLRB-GLRA2 heteropentamers contain four GLRA2 subunits and one GLRB subunit, although alternative subunit composition cannot be excluded. Forms a heteropentamer with GLRA3. Interacts with GPHN. As to expression, detected in spinal cord and brain stem (at protein level). Detected in spinal cord, cerebellum and brain cortex.

Its subcellular location is the postsynaptic cell membrane. It is found in the cell membrane. The protein localises to the synapse. The protein resides in the perikaryon. It localises to the cell projection. Its subcellular location is the dendrite. It is found in the cytoplasm. The catalysed reaction is chloride(in) = chloride(out). Channel opening is triggered by extracellular glycine. Heteropentameric channels composed of GLRB and GLRA1 are activated by lower glycine levels than homopentameric GLRA1. In terms of biological role, subunit of heteromeric glycine-gated chloride channels. Plays an important role in the down-regulation of neuronal excitability. Contributes to the generation of inhibitory postsynaptic currents. This is Glycine receptor subunit beta (Glrb) from Rattus norvegicus (Rat).